The sequence spans 476 residues: uncharacterized protein (476 aa).

The first 24 residues, 1–24 (MIRKSATGVIVALAVIWGGGTWYT), serve as a signal peptide directing secretion.

This sequence to E.coli YdgA and H.influenzae HI_1236.

This is an uncharacterized protein from Escherichia coli (strain K12).